The sequence spans 337 residues: Probable dihydroorotase (337 aa).

Zn(2+) is bound by residues histidine 12, histidine 14, lysine 95, histidine 132, histidine 170, and aspartate 240. An N6-carboxylysine modification is found at lysine 95.

The protein belongs to the metallo-dependent hydrolases superfamily. DHOase family. Class II DHOase subfamily. Requires Zn(2+) as cofactor.

It carries out the reaction (S)-dihydroorotate + H2O = N-carbamoyl-L-aspartate + H(+). Its pathway is pyrimidine metabolism; UMP biosynthesis via de novo pathway; (S)-dihydroorotate from bicarbonate: step 3/3. The chain is Probable dihydroorotase (ura2) from Schizosaccharomyces pombe (strain 972 / ATCC 24843) (Fission yeast).